Consider the following 662-residue polypeptide: Probable quinol oxidase subunit 1 (662 aa).

The next 2 helical transmembrane spans lie at 14 to 34 (WMIT…IAVI) and 58 to 78 (VMYL…ALLI). H102 is a binding site for Fe(II)-heme a. Helical transmembrane passes span 103-123 (GVIM…NIVV), 140-160 (VSFW…IIGG), 187-207 (IAIQ…FVTI), 228-248 (FITT…LALM), 273-293 (FFWV…FGIY), 311-331 (MVWA…HHFF), 336-356 (GALI…PTGV), and 376-396 (MLFS…GVML). 4 residues coordinate Cu cation: H279, Y283, H328, and H329. The 1'-histidyl-3'-tyrosine (His-Tyr) cross-link spans 279–283 (HPEVY). H414 lines the heme a3 pocket. The next 5 helical transmembrane spans lie at 415–435 (FHYT…IFWY), 451–471 (CFWF…ILGL), 493–513 (ISTI…VSIV), 587–604 (PVGF…FFLI), and 608–627 (VIPA…YRSF). H416 contributes to the Fe(II)-heme a binding site.

It belongs to the heme-copper respiratory oxidase family. The cofactor is Cu cation. It depends on ferriheme a as a cofactor. Heme A3. is required as a cofactor.

It localises to the cell membrane. It catalyses the reaction 2 a quinol + O2 = 2 a quinone + 2 H2O. It functions in the pathway energy metabolism; oxidative phosphorylation. Its function is as follows. Catalyzes quinol oxidation with the concomitant reduction of oxygen to water. The polypeptide is Probable quinol oxidase subunit 1 (qoxB) (Staphylococcus aureus (strain COL)).